Consider the following 630-residue polypeptide: Biosynthetic arginine decarboxylase (630 aa).

Lys-99 is subject to N6-(pyridoxal phosphate)lysine. Residue 281–291 (VDIGGGLGVDY) coordinates substrate.

The protein belongs to the Orn/Lys/Arg decarboxylase class-II family. SpeA subfamily. Requires Mg(2+) as cofactor. It depends on pyridoxal 5'-phosphate as a cofactor.

The catalysed reaction is L-arginine + H(+) = agmatine + CO2. In terms of biological role, catalyzes the biosynthesis of agmatine from arginine. This chain is Biosynthetic arginine decarboxylase, found in Bacteroides thetaiotaomicron (strain ATCC 29148 / DSM 2079 / JCM 5827 / CCUG 10774 / NCTC 10582 / VPI-5482 / E50).